Reading from the N-terminus, the 210-residue chain is Tissue inhibitor of metalloproteinase (210 aa).

The signal sequence occupies residues 1 to 27 (MDLRKHLGLLTLLLVAVFAFYGRPADA). C28 contacts Zn(2+). 2 involved in metalloproteinase-binding regions span residues 28–31 (CSCM) and 93–94 (DA). Intrachain disulfides connect C28-C96, C30-C118, C145-C195, C150-C155, and C165-C180. The NTR domain maps to 28 to 145 (CSCMPSHPQT…SGGYAKATNC (118 aa)).

The protein belongs to the protease inhibitor I35 (TIMP) family. In terms of tissue distribution, expressed in heads of female and male adult flies. Expressed at the time of eclosion in unopened wings of adult flies. Strongly expressed at the tip of ovarian germarium region 1 where germline stem cells (GSCs) and cystoblasts reside and in region 2 of the germarium.

It localises to the secreted. Its function is as follows. Metalloproteinase inhibitor that acts on both matrix metalloproteinases Mmp1 and Mmp2 in vitro. Complexes with metalloproteinases and irreversibly inactivates them by binding to their catalytic zinc cofactor. Required for wing maturation which is the final step in morphogenesis of the adult fly. Involved in the negative regulation of developmental tissue invasion for imaginal disk eversion during metamorphosis by inhibiting Mmp-mediated basement membrane (BM) degradation. Required for oogenesis and for the long-term maintainance of germarial structure and shape in the adult ovaries. Required for maintaining composition and biophysical properties of the extracellular matrix (ECM), and for the normal organization and cyst production of the germline stem cell (GSC) niche. This is Tissue inhibitor of metalloproteinase from Drosophila melanogaster (Fruit fly).